We begin with the raw amino-acid sequence, 272 residues long: Neurogenin-2 (272 aa).

Residues L30 to A69 are disordered. The region spanning T112 to L164 is the bHLH domain. The segment covering A197–S239 has biased composition (low complexity). The interval A197–H264 is disordered.

As to quaternary structure, efficient DNA binding requires dimerization with another bHLH protein.

The protein resides in the nucleus. Functionally, transcriptional regulator. Involved in neuronal differentiation. Activates transcription by binding to the E box (5'-CANNTG-3'). In Homo sapiens (Human), this protein is Neurogenin-2 (NEUROG2).